Here is a 235-residue protein sequence, read N- to C-terminus: Small ribosomal subunit protein uS3 (235 aa).

Positions 39–107 (IRQYVFKALP…DVSLNIVEIR (69 aa)) constitute a KH type-2 domain.

This sequence belongs to the universal ribosomal protein uS3 family. As to quaternary structure, part of the 30S ribosomal subunit. Forms a tight complex with proteins S10 and S14.

Functionally, binds the lower part of the 30S subunit head. Binds mRNA in the 70S ribosome, positioning it for translation. This chain is Small ribosomal subunit protein uS3, found in Sphingopyxis alaskensis (strain DSM 13593 / LMG 18877 / RB2256) (Sphingomonas alaskensis).